A 376-amino-acid chain; its full sequence is Chaperone protein DnaJ (376 aa).

Residues 5–70 form the J domain; the sequence is DYYEILGVSK…QKRAAYDQYG (66 aa). The segment at 131–209 adopts a CR-type zinc-finger fold; that stretch reads GVTKEIRIPT…CHGHGRVERS (79 aa). Residues Cys144, Cys147, Cys161, Cys164, Cys183, Cys186, Cys197, and Cys200 each contribute to the Zn(2+) site. CXXCXGXG motif repeat units lie at residues 144 to 151, 161 to 168, 183 to 190, and 197 to 204; these read CDVCHGSG, CPTCHGSG, CPHCQGRG, and CNKCHGHG.

This sequence belongs to the DnaJ family. In terms of assembly, homodimer. The cofactor is Zn(2+).

The protein resides in the cytoplasm. Its function is as follows. Participates actively in the response to hyperosmotic and heat shock by preventing the aggregation of stress-denatured proteins and by disaggregating proteins, also in an autonomous, DnaK-independent fashion. Unfolded proteins bind initially to DnaJ; upon interaction with the DnaJ-bound protein, DnaK hydrolyzes its bound ATP, resulting in the formation of a stable complex. GrpE releases ADP from DnaK; ATP binding to DnaK triggers the release of the substrate protein, thus completing the reaction cycle. Several rounds of ATP-dependent interactions between DnaJ, DnaK and GrpE are required for fully efficient folding. Also involved, together with DnaK and GrpE, in the DNA replication of plasmids through activation of initiation proteins. This chain is Chaperone protein DnaJ, found in Escherichia coli (strain K12 / MC4100 / BW2952).